Reading from the N-terminus, the 272-residue chain is Indole-3-glycerol phosphate synthase (272 aa).

Belongs to the TrpC family.

It carries out the reaction 1-(2-carboxyphenylamino)-1-deoxy-D-ribulose 5-phosphate + H(+) = (1S,2R)-1-C-(indol-3-yl)glycerol 3-phosphate + CO2 + H2O. Its pathway is amino-acid biosynthesis; L-tryptophan biosynthesis; L-tryptophan from chorismate: step 4/5. The sequence is that of Indole-3-glycerol phosphate synthase from Mycobacterium leprae (strain Br4923).